The sequence spans 272 residues: Petrobactin import ATP-binding protein FpuC (272 aa).

Residues 2–238 (ISVNKVFYAH…EMFQHIFGIE (237 aa)) enclose the ABC transporter domain. Residue 34 to 41 (GPNGSGKS) coordinates ATP.

The protein belongs to the ABC transporter superfamily. As to quaternary structure, the complex is composed of two ATP-binding proteins (FpuC), two transmembrane proteins (FpuB) and a solute-binding protein (FpuA).

The protein resides in the cell membrane. The catalysed reaction is a Fe(III)-siderophore(out) + ATP + H2O = a Fe(III)-siderophore(in) + ADP + phosphate + H(+). Functionally, part of an ABC transporter complex involved in ferric-petrobactin uptake. Probably responsible for energy coupling to the transport system. In Bacillus anthracis, this protein is Petrobactin import ATP-binding protein FpuC.